Here is a 755-residue protein sequence, read N- to C-terminus: Polyribonucleotide nucleotidyltransferase (755 aa).

The Mg(2+) site is built by Asp527 and Asp533. One can recognise a KH domain in the interval Pro593–Ile652. The S1 motif domain occupies Gly664–Val733. Positions Gly734 to Gln755 are disordered. Residues Glu740–Gln755 show a composition bias toward low complexity.

Belongs to the polyribonucleotide nucleotidyltransferase family. The cofactor is Mg(2+).

The protein resides in the cytoplasm. It carries out the reaction RNA(n+1) + phosphate = RNA(n) + a ribonucleoside 5'-diphosphate. In terms of biological role, involved in mRNA degradation. Catalyzes the phosphorolysis of single-stranded polyribonucleotides processively in the 3'- to 5'-direction. The chain is Polyribonucleotide nucleotidyltransferase from Mycobacteroides abscessus (strain ATCC 19977 / DSM 44196 / CCUG 20993 / CIP 104536 / JCM 13569 / NCTC 13031 / TMC 1543 / L948) (Mycobacterium abscessus).